Here is an 811-residue protein sequence, read N- to C-terminus: Actin filament-associated protein 1-like 2 (811 aa).

2 disordered regions span residues 67-110 and 132-168; these read KEAQ…PPPK and EPYN…QQHQ. A PH 1 domain is found at 181–277; the sequence is DAMICAFLWR…WLKVIQDISG (97 aa). Residues 294-326 form a disordered region; sequence QRQIHPKAEGTDRHSGASESGSSTDGHPETPEI. The segment covering 299–309 has biased composition (basic and acidic residues); the sequence is PKAEGTDRHSG. Residues 359–453 enclose the PH 2 domain; sequence ALETSNYLNV…WLGLLLLESG (95 aa). Disordered regions lie at residues 500–532 and 558–631; these read RGQR…GEAE and LGSP…KERV. 3 stretches are compositionally biased toward basic and acidic residues: residues 521 to 532, 566 to 577, and 622 to 631; these read DEPKSEEKGEAE, VSGKKDNEESER, and RLEKSNKERV. Residues 642 to 737 are a coiled coil; it reads LLGKNRTEAE…KENLRKAELG (96 aa).

As to quaternary structure, interacts with src.

The protein resides in the cytoplasm. In terms of biological role, may play a role in a signaling cascade by enhancing the kinase activity of src. Contributes to src-regulated transcription activation. The polypeptide is Actin filament-associated protein 1-like 2 (afap1l2) (Xenopus laevis (African clawed frog)).